The primary structure comprises 113 residues: Hydrogenase maturation factor HypA (113 aa).

His2 contributes to the Ni(2+) binding site. Zn(2+) is bound by residues Cys73, Cys76, Cys89, and Cys92.

This sequence belongs to the HypA/HybF family.

In terms of biological role, involved in the maturation of [NiFe] hydrogenases. Required for nickel insertion into the metal center of the hydrogenase. This Paracoccus denitrificans (strain Pd 1222) protein is Hydrogenase maturation factor HypA.